The following is a 114-amino-acid chain: Flagellar hook-basal body complex protein FliE (114 aa).

The protein belongs to the FliE family.

The protein localises to the bacterial flagellum basal body. The sequence is that of Flagellar hook-basal body complex protein FliE from Burkholderia vietnamiensis (strain G4 / LMG 22486) (Burkholderia cepacia (strain R1808)).